The primary structure comprises 265 residues: 4-hydroxy-tetrahydrodipicolinate reductase (265 aa).

Residues glycine 7–methionine 12 and aspartate 33 each bind NAD(+). Position 34 (arginine 34) interacts with NADP(+). NAD(+)-binding positions include glycine 96–threonine 98 and alanine 120–methionine 123. The Proton donor/acceptor role is filled by histidine 153. (S)-2,3,4,5-tetrahydrodipicolinate is bound at residue histidine 154. The active-site Proton donor is lysine 157. Position 163–164 (glycine 163–threonine 164) interacts with (S)-2,3,4,5-tetrahydrodipicolinate.

This sequence belongs to the DapB family.

It is found in the cytoplasm. The enzyme catalyses (S)-2,3,4,5-tetrahydrodipicolinate + NAD(+) + H2O = (2S,4S)-4-hydroxy-2,3,4,5-tetrahydrodipicolinate + NADH + H(+). It carries out the reaction (S)-2,3,4,5-tetrahydrodipicolinate + NADP(+) + H2O = (2S,4S)-4-hydroxy-2,3,4,5-tetrahydrodipicolinate + NADPH + H(+). The protein operates within amino-acid biosynthesis; L-lysine biosynthesis via DAP pathway; (S)-tetrahydrodipicolinate from L-aspartate: step 4/4. Catalyzes the conversion of 4-hydroxy-tetrahydrodipicolinate (HTPA) to tetrahydrodipicolinate. In Burkholderia ambifaria (strain ATCC BAA-244 / DSM 16087 / CCUG 44356 / LMG 19182 / AMMD) (Burkholderia cepacia (strain AMMD)), this protein is 4-hydroxy-tetrahydrodipicolinate reductase.